The following is a 304-amino-acid chain: 17-beta-hydroxysteroid dehydrogenase 13 (304 aa).

An N-terminal signal peptide occupies residues 1 to 19 (MNLILEFLLLVGVIIYSYL). Serine 33 bears the Phosphoserine mark. Position 40 to 67 (40 to 67 (LITGAGHGIGRLTAYEFAKQKSRLVLWD)) interacts with NAD(+). Lysine 79 bears the N6-acetyllysine mark. Position 172 (serine 172) interacts with substrate. Catalysis depends on tyrosine 185, which acts as the Proton acceptor. NAD(+) is bound at residue lysine 189. The interval 276–304 (SSKHPHGGSQQPVTPIPGDLTPSSDFLKH) is disordered.

The protein belongs to the short-chain dehydrogenases/reductases (SDR) family. In terms of tissue distribution, expressed predominantly in the liver (at protein level).

The protein resides in the lipid droplet. Its subcellular location is the endoplasmic reticulum. The catalysed reaction is 17beta-estradiol + NAD(+) = estrone + NADH + H(+). It carries out the reaction all-trans-retinol + NAD(+) = all-trans-retinal + NADH + H(+). The enzyme catalyses all-trans-retinal + NAD(+) + H2O = all-trans-retinoate + NADH + 2 H(+). Its function is as follows. Plays a pivotal role in hepatic lipid metabolism. In vitro, it catalyzes the oxidation of a variety of lipid substrates, including 17beta-estradiol, retinol, retinal, and leukotriene B4. This chain is 17-beta-hydroxysteroid dehydrogenase 13 (Hsd17b13), found in Mus musculus (Mouse).